A 288-amino-acid polypeptide reads, in one-letter code: Probable coatomer subunit epsilon (288 aa).

S262 is modified (phosphoserine).

This sequence belongs to the COPE family. Oligomeric complex that consists of at least the alpha, beta, beta', gamma, delta, epsilon and zeta subunits.

It localises to the cytoplasm. It is found in the golgi apparatus membrane. The protein localises to the cytoplasmic vesicle. The protein resides in the COPI-coated vesicle membrane. The coatomer is a cytosolic protein complex that binds to dilysine motifs and reversibly associates with Golgi non-clathrin-coated vesicles, which further mediate biosynthetic protein transport from the ER, via the Golgi up to the trans Golgi network. The coatomer complex is required for budding from Golgi membranes, and is essential for the retrograde Golgi-to-ER transport of dilysine-tagged proteins. This Schizosaccharomyces pombe (strain 972 / ATCC 24843) (Fission yeast) protein is Probable coatomer subunit epsilon (sec28).